Reading from the N-terminus, the 630-residue chain is WD repeat-containing protein 26 homolog (630 aa).

Residues 1 to 13 (MQSTSSTSSGSCS) are compositionally biased toward low complexity. The disordered stretch occupies residues 1–90 (MQSTSSTSSG…NNRENTSCSG (90 aa)). Phosphoserine occurs at positions 36 and 40. Composition is skewed to polar residues over residues 48-57 (PSGSSAATNG) and 66-75 (IVNNNGSSSR). The LisH domain maps to 96–128 (SNQEIIRLIGQYLHDVGLDKSVQTLMLESGCYL). The 62-residue stretch at 129–190 (EHPSATKFRE…EHLDDGNPLD (62 aa)) folds into the CTLH domain. 7 WD repeats span residues 312–351 (DHCD…LTLK), 359–400 (QAQL…LVVK), 404–443 (SLED…VDSW), 445–482 (GVRV…SDFD), 485–524 (REPH…LVRR), 529–569 (RQSN…PLAK), and 572–612 (GHTK…SSAT). The tract at residues 604–630 (PKPNGSSATTESDDCSSSSSSSSWNMT) is disordered. Low complexity predominate over residues 609–630 (SSATTESDDCSSSSSSSSWNMT).

It is found in the cytoplasm. The protein localises to the mitochondrion. Functionally, G-beta-like protein involved in cell signal transduction. The polypeptide is WD repeat-containing protein 26 homolog (Drosophila melanogaster (Fruit fly)).